The sequence spans 331 residues: MAAQMYYDDDADLNIIQGRTVAVIGYGSQGHAHALSLRDSGVDVRVGLPESSKSRAKAEEDGLRVVTPAEAAQEADLIMILVPDHIHRDLYANEIAPHLNEGDALFFGHGFSIRYGLITPPEGVDVAMVAPKGPGHLVRRQFEAGRGVPVLVAVEKDASGSAWDLALSYAKAIGGTRAGALKTTFKEETETDLFGEQAVLCGGVSELIKAGFATLVEAGYQPEVAYFECLHEMKLIVDLMYEGGISKMYWSVSDNAEYGGYTRGPRVITESTREEMRKILQEVQDGTYAKELVEEFDKGRPNFLKRREAEQGEQIEKVGTELRSLMSWLKN.

The 181-residue stretch at 3–183 (AQMYYDDDAD…GGTRAGALKT (181 aa)) folds into the KARI N-terminal Rossmann domain. NADP(+) is bound by residues 26 to 29 (YGSQ), Ser52, and Ser54. The active site involves His109. Gly135 contributes to the NADP(+) binding site. Residues 184 to 329 (TFKEETETDL…TELRSLMSWL (146 aa)) enclose the KARI C-terminal knotted domain. Asp192, Glu196, Glu228, and Glu232 together coordinate Mg(2+). Ser253 lines the substrate pocket.

It belongs to the ketol-acid reductoisomerase family. Mg(2+) serves as cofactor.

The enzyme catalyses (2R)-2,3-dihydroxy-3-methylbutanoate + NADP(+) = (2S)-2-acetolactate + NADPH + H(+). It catalyses the reaction (2R,3R)-2,3-dihydroxy-3-methylpentanoate + NADP(+) = (S)-2-ethyl-2-hydroxy-3-oxobutanoate + NADPH + H(+). The protein operates within amino-acid biosynthesis; L-isoleucine biosynthesis; L-isoleucine from 2-oxobutanoate: step 2/4. Its pathway is amino-acid biosynthesis; L-valine biosynthesis; L-valine from pyruvate: step 2/4. Involved in the biosynthesis of branched-chain amino acids (BCAA). Catalyzes an alkyl-migration followed by a ketol-acid reduction of (S)-2-acetolactate (S2AL) to yield (R)-2,3-dihydroxy-isovalerate. In the isomerase reaction, S2AL is rearranged via a Mg-dependent methyl migration to produce 3-hydroxy-3-methyl-2-ketobutyrate (HMKB). In the reductase reaction, this 2-ketoacid undergoes a metal-dependent reduction by NADPH to yield (R)-2,3-dihydroxy-isovalerate. The sequence is that of Ketol-acid reductoisomerase (NADP(+)) from Thermobifida fusca (strain YX).